Here is a 1296-residue protein sequence, read N- to C-terminus: DNA-directed RNA polymerase subunit beta' (1296 aa).

Zn(2+) is bound by residues Cys60, Cys62, Cys75, and Cys78. Mg(2+) is bound by residues Asp535, Asp537, and Asp539. Zn(2+) contacts are provided by Cys877, Cys954, Cys961, and Cys964.

This sequence belongs to the RNA polymerase beta' chain family. The RNAP catalytic core consists of 2 alpha, 1 beta, 1 beta' and 1 omega subunit. When a sigma factor is associated with the core the holoenzyme is formed, which can initiate transcription. Requires Mg(2+) as cofactor. The cofactor is Zn(2+).

It carries out the reaction RNA(n) + a ribonucleoside 5'-triphosphate = RNA(n+1) + diphosphate. Functionally, DNA-dependent RNA polymerase catalyzes the transcription of DNA into RNA using the four ribonucleoside triphosphates as substrates. The chain is DNA-directed RNA polymerase subunit beta' from Beutenbergia cavernae (strain ATCC BAA-8 / DSM 12333 / CCUG 43141 / JCM 11478 / NBRC 16432 / NCIMB 13614 / HKI 0122).